The primary structure comprises 352 residues: MSEPQSWSVMASQMTSAQLIRVYLDGSMGIGKTSMLNEIPTHSLMGVPVLKVFEPMKYWRYYFTDLVTTVNDTCDRRRRGEFSLFQSSMIVTALQSKFADPYLVFHERLSSKCHRITGTRGNPSLILILDRHPISATVCFPIARHLTGDCSLEMLISMIIRLPQEPPGCNLVIVDLHDEKEHVSRLSSRNRTGEKTDLLMLRALNAVYSCLVDTIMYANHICPYSKDEWESEWLDLPWFDTSLATTFINEPRTDYRGSRVSLHHTLLAIFKRRELCAEDGSLSTTHAWILWGLLMKLRNINVERFNITGLSTTKCVESFMDTMSERLVTHSSWNDAFEIEADVLAYNKEMAM.

Residue 26–33 (GSMGIGKT) participates in ATP binding. Catalysis depends on Glu54, which acts as the Proton acceptor. Gln95 contacts substrate. Arg185 serves as a coordination point for ATP. Arg191 is a substrate binding site.

It belongs to the herpesviridae thymidine kinase family. In terms of assembly, homodimer.

The catalysed reaction is thymidine + ATP = dTMP + ADP + H(+). In terms of biological role, catalyzes the transfer of the gamma-phospho group of ATP to thymidine to generate dTMP in the salvage pathway of pyrimidine synthesis. The dTMP serves as a substrate for DNA polymerase during viral DNA replication. Allows the virus to be reactivated and to grow in non-proliferative cells lacking a high concentration of phosphorylated nucleic acid precursors. The polypeptide is Thymidine kinase (Gallus gallus (Chicken)).